Consider the following 252-residue polypeptide: Phosphomannomutase (252 aa).

The Nucleophile role is filled by Asp-13. Mg(2+)-binding residues include Asp-13 and Asp-15. The active-site Proton donor/acceptor is the Asp-15. Residues Arg-22, Arg-124, Arg-135, Arg-142, Ser-180, and Asp-182 each coordinate alpha-D-mannose 1-phosphate. 3 residues coordinate Mg(2+): Asp-208, Tyr-220, and Thr-225.

Belongs to the eukaryotic PMM family. In terms of assembly, homodimer. Mg(2+) serves as cofactor. As to expression, expressed in roots, stems, leaves, flowers and immature fruits.

It localises to the cytoplasm. The catalysed reaction is alpha-D-mannose 1-phosphate = D-mannose 6-phosphate. The protein operates within nucleotide-sugar biosynthesis; GDP-alpha-D-mannose biosynthesis; alpha-D-mannose 1-phosphate from D-fructose 6-phosphate: step 2/2. Functionally, catalyzes the interconversion of mannose-6-phosphate to mannose-1-phosphate, the precursor for the synthesis of GDP-mannose. GDP-mannose is an essential sugar nucleotide for the synthesis of D-mannose-containing cell wall polysaccharides (galactomannans and glucomannans), glycolipids, glycoproteins and the antioxidant L-ascorbate. Can complement the yeast temperature-sensitive mutant sec53-6. The protein is Phosphomannomutase of Nicotiana benthamiana.